The sequence spans 339 residues: Type IV secretion system protein PtlH homolog (339 aa).

Belongs to the GSP E family.

This chain is Type IV secretion system protein PtlH homolog (ptlH), found in Bordetella bronchiseptica (strain ATCC BAA-588 / NCTC 13252 / RB50) (Alcaligenes bronchisepticus).